Reading from the N-terminus, the 180-residue chain is Progesterone receptor (180 aa).

The NR C4-type zinc-finger motif lies at 1–11 (KNCPACRLRKC). Positions 1 to 16 (KNCPACRLRKCCQAGM) form a DNA-binding region, nuclear receptor. A Phosphoserine modification is found at Ser60. The 118-residue stretch at 63–180 (QEIQLFPPLI…QRMKESSFYS (118 aa)) folds into the NR LBD domain. The interval 71–180 (LINLLLSIEP…QRMKESSFYS (110 aa)) is AF2; mediates transcriptional activation. Position 150 (Arg150) interacts with progesterone.

It belongs to the nuclear hormone receptor family. NR3 subfamily. In terms of assembly, interacts with SMARD1 and UNC45A. Interacts with CUEDC2; the interaction promotes ubiquitination, decreases sumoylation, and represses transcriptional activity. Interacts with PIAS3; the interaction promotes sumoylation of PR in a hormone-dependent manner, inhibits DNA-binding, and alters nuclear export. Interacts with SP1; the interaction requires ligand-induced phosphorylation by ERK1/2-MAPK. Interacts with PRMT2. Interacts with NCOA2 and NCOA1. Interacts with KLF9. Interacts with GTF2B. Phosphorylated on multiple serine sites. Several of these sites are hormone-dependent. In terms of processing, sumoylation is hormone-dependent and represses transcriptional activity. Sumoylation on all three sites is enhanced by PIAS3. Desumoylated by SENP1. Sumoylation is repressed by ubiquitination and modulated by phosphorylation. Post-translationally, ubiquitination is hormone-dependent and represses sumoylation. Palmitoylated by ZDHHC7 and ZDHHC21. Palmitoylation is required for plasma membrane targeting and for rapid intracellular signaling via ERK and AKT kinases and cAMP generation.

It localises to the nucleus. Its subcellular location is the cytoplasm. Its function is as follows. The steroid hormones and their receptors are involved in the regulation of eukaryotic gene expression and affect cellular proliferation and differentiation in target tissues. Transcriptional activator of several progesteron-dependent promoters in a variety of cell types. Involved in activation of SRC-dependent MAPK signaling on hormone stimulation. The polypeptide is Progesterone receptor (PGR) (Notamacropus eugenii (Tammar wallaby)).